Consider the following 182-residue polypeptide: NADH-quinone oxidoreductase subunit B (182 aa).

Cysteine 47, cysteine 48, cysteine 113, and cysteine 142 together coordinate [4Fe-4S] cluster.

The protein belongs to the complex I 20 kDa subunit family. In terms of assembly, NDH-1 is composed of 14 different subunits. Subunits NuoB, C, D, E, F, and G constitute the peripheral sector of the complex. It depends on [4Fe-4S] cluster as a cofactor.

Its subcellular location is the cell inner membrane. It carries out the reaction a quinone + NADH + 5 H(+)(in) = a quinol + NAD(+) + 4 H(+)(out). NDH-1 shuttles electrons from NADH, via FMN and iron-sulfur (Fe-S) centers, to quinones in the respiratory chain. The immediate electron acceptor for the enzyme in this species is believed to be ubiquinone. Couples the redox reaction to proton translocation (for every two electrons transferred, four hydrogen ions are translocated across the cytoplasmic membrane), and thus conserves the redox energy in a proton gradient. The protein is NADH-quinone oxidoreductase subunit B of Anaeromyxobacter dehalogenans (strain 2CP-1 / ATCC BAA-258).